The primary structure comprises 172 residues: Urease accessory protein UreE (172 aa).

Belongs to the UreE family.

It localises to the cytoplasm. Its function is as follows. Involved in urease metallocenter assembly. Binds nickel. Probably functions as a nickel donor during metallocenter assembly. This is Urease accessory protein UreE from Shewanella halifaxensis (strain HAW-EB4).